A 411-amino-acid chain; its full sequence is MSIENKDNINKIVLAYSGGLDTSIIAKWLQDTYDAEVITFTADIGQGEEVEPARAKAEAMGIKHIHIEDLRAEFARDYVFPMFRANAIYEGEYLLGTSIARPLIAKRLVEIAKEHNADAISHGATGKGNDQVRFELGAIALAPDVKTIAPWREWDLSSRESLMAYAKEHNIPIDFAANKKKSPYSMDANLLHISYEGDILEDPYAEAEDDMWRWSVSPEQAPDTPEYLELEYEKGDIVAINGEKLEPYEVMIKLNELGGKHGIGRLDIVENRYVGMKSRGCYETPAGTIMLKAHRGMESLTLDREAAHLKDELMPRYAKIIYNGYWFSPERQMLQALIDKSQEYVTGTVRVKLYKGNVSVVGRKSPYSLFDEKIATFEDDAGAYDQKDAEGFIRLNGLRLSIEASRGRDLS.

Residues 15–23 (AYSGGLDTS) and Ala-42 contribute to the ATP site. Positions 93 and 98 each coordinate L-citrulline. Gly-123 is an ATP binding site. 3 residues coordinate L-aspartate: Thr-125, Asn-129, and Asp-130. An L-citrulline-binding site is contributed by Asn-129. L-citrulline contacts are provided by Arg-133, Ser-185, Ser-194, Glu-270, and Tyr-282.

Belongs to the argininosuccinate synthase family. Type 1 subfamily. Homotetramer.

The protein resides in the cytoplasm. The catalysed reaction is L-citrulline + L-aspartate + ATP = 2-(N(omega)-L-arginino)succinate + AMP + diphosphate + H(+). It functions in the pathway amino-acid biosynthesis; L-arginine biosynthesis; L-arginine from L-ornithine and carbamoyl phosphate: step 2/3. The chain is Argininosuccinate synthase from Psychrobacter sp. (strain PRwf-1).